A 694-amino-acid polypeptide reads, in one-letter code: Polyribonucleotide nucleotidyltransferase (694 aa).

Positions 486 and 492 each coordinate Mg(2+). Residues 553 to 612 enclose the KH domain; that stretch reads PRIETMQIKPTKIASVIGPGGKQIRQIIEETGVQIDVNDLGVVSISASSASAINKAKEII. Residues 622-690 form the S1 motif domain; it reads GKTYRGRVTS…EKGQLKLSHK (69 aa).

This sequence belongs to the polyribonucleotide nucleotidyltransferase family. Mg(2+) is required as a cofactor.

The protein localises to the cytoplasm. The enzyme catalyses RNA(n+1) + phosphate = RNA(n) + a ribonucleoside 5'-diphosphate. Involved in mRNA degradation. Catalyzes the phosphorolysis of single-stranded polyribonucleotides processively in the 3'- to 5'-direction. This is Polyribonucleotide nucleotidyltransferase from Chlamydia pneumoniae (Chlamydophila pneumoniae).